The following is a 502-amino-acid chain: Maturase K (502 aa).

The protein belongs to the intron maturase 2 family. MatK subfamily.

It is found in the plastid. The protein resides in the chloroplast. In terms of biological role, usually encoded in the trnK tRNA gene intron. Probably assists in splicing its own and other chloroplast group II introns. In Arabis blepharophylla (Coast rock-cress), this protein is Maturase K.